The sequence spans 617 residues: Melatonin-related receptor (617 aa).

At 1–30 (MGPTLAVPTPYGCIGCKLPQPEYPPALIIF) the chain is on the extracellular side. A helical membrane pass occupies residues 31–51 (MFCAMVITIVVDLIGNSMVIL). At 52–64 (AVTKNKKLRNSGN) the chain is on the cytoplasmic side. Residues 65–85 (IFVVSLSVADMLVAIYPYPLM) form a helical membrane-spanning segment. Residues 86–103 (LHAMSIGGWDLSQLQCQM) are Extracellular-facing. C101 and C178 are joined by a disulfide. A helical membrane pass occupies residues 104–124 (VGFITGLSVVGSIFNIVAIAI). Topologically, residues 125–143 (NRYCYICHSLQYERIFSVR) are cytoplasmic. A helical membrane pass occupies residues 144–164 (NTCIYLVITWIMTVLAVLPNM). At 165–188 (YIGTIEYDPRTYTCIFNYLNNPVF) the chain is on the extracellular side. A helical membrane pass occupies residues 189 to 209 (TVTIVCIHFVLPLLIVGFCYV). Residues 210 to 239 (RIWTKVLAARDPAGQNPDNQLAEVRNFLTM) lie on the Cytoplasmic side of the membrane. The chain crosses the membrane as a helical span at residues 240-260 (FVIFLLFAVCWCPINVLTVLV). The Extracellular segment spans residues 261-273 (AVSPKEMAGKIPN). Residues 274–294 (WLYLAAYFIAYFNSCLNAVIY) form a helical membrane-spanning segment. Residues 295-617 (GLLNENFRRE…VEDDPDEMAV (323 aa)) are Cytoplasmic-facing. 2 disordered regions span residues 340–438 (AHAR…ATVY) and 464–596 (SVHF…VTTS). The span at 341–353 (HARDQAREQDRAH) shows a compositional bias: basic and acidic residues. Residues 485–500 (GSHSKSAFSAATSHPK) are compositionally biased toward polar residues.

It belongs to the G-protein coupled receptor 1 family. As to quaternary structure, homodimer, and heterodimer with MTNR1A and MTNR1B. Interacts with KAT5. Interacts with RTN4 isoform A/NOGO-A. Interacts with TGFBR1. Interacts with GTF2I. Cleaved by CAPN1 in a calcium-dependent manner. As to expression, hypothalamus and pituitary.

The protein resides in the cell membrane. The protein localises to the postsynaptic density. It localises to the nucleus. Its function is as follows. G protein-coupled receptor that plays a role in numerous physiological processes including regulation of energy metabolism, neurite outgrowth or cell migration. Promotes self-renewal and neuronal differentiation of neural progenitor cells through activation of the NOTCH and WNT/beta-catenin signaling pathways. Modulates the KAT5-dependent glucocorticoid receptor signaling by modulating KAT5 subcellular compartmentalisation. Also plays a role in the activation TGFBR1 in the absence of TGFBR2 by interfering with FKBP1A binding to TGFBR1, leading to induction of both canonical and non-canonical SMAD signaling pathways resulting in inhibition of proliferation or promotion of migration. Functionally, upon cleavage by CAPN1, functions as a scaffold in the nucleus for interacting partners such as GTF2I to promote FOS promoter activation. The polypeptide is Melatonin-related receptor (GPR50) (Homo sapiens (Human)).